We begin with the raw amino-acid sequence, 795 residues long: RalBP1-associated Eps domain-containing protein 1 (795 aa).

The EH 1 domain occupies 10 to 113 (EQKYYSDLFS…SKNEQESRLA (104 aa)). Residues 112–238 (LAASYSSDSE…NWVSFADTPP (127 aa)) are disordered. Residues 115-126 (SYSSDSENQGSY) show a composition bias toward polar residues. Residues S145, S162, S166, and S170 each carry the phosphoserine modification. A compositionally biased stretch (low complexity) spans 156 to 168 (EQQEPVSPVVSPQ). T173 is modified (phosphothreonine). Low complexity predominate over residues 205–216 (GDAQAGSSAGDA). Phosphoserine occurs at positions 272 and 273. The EH 2 domain maps to 285-374 (QRQYYVNQFK…ESLMPKLIDL (90 aa)). Y288 carries the post-translational modification Phosphotyrosine. Residue S307 is modified to Phosphoserine. The EF-hand domain occupies 318–353 (LPILELSHIWELSDFDKDGALTLDEFCAAFHLVVAR). Ca(2+) is bound by residues D331, D333, D335, and E342. 2 disordered regions span residues 380 to 433 (VGEQ…SSQT) and 469 to 720 (ELKR…DEHT). Residues 407–433 (LNQTWPELNQSSEQWETFSERSSSSQT) show a composition bias toward polar residues. 3 positions are modified to phosphoserine: S475, S482, and S489. Polar residues-rich tracts occupy residues 497–518 (INSS…SDSF) and 525–542 (IGSS…SPDN). S539 bears the Phosphoserine mark. T543 carries the phosphothreonine modification. A compositionally biased stretch (pro residues) spans 543–553 (TAPPPPPPRPQ). S561 carries the phosphoserine modification. Polar residues predominate over residues 562-573 (LDMNRTFAVTTG). Over residues 574–583 (QQQAGVVAHP) the composition is skewed to low complexity. Residues 584-595 (PAVPPRPQPSQA) are compositionally biased toward pro residues. 2 stretches are compositionally biased toward polar residues: residues 611-622 (THTSTSPQQIPE) and 681-692 (ATNVPANVSKGT). The interval 651-795 (HPEVLPAEKA…LEQLRPFSHL (145 aa)) is interaction with RALBP1. Residues 707–720 (KSEDELRPDVDEHT) are compositionally biased toward basic and acidic residues. Phosphoserine occurs at positions 708 and 739. The stretch at 750–790 (SIRRNKETNTVLARLNSELQQQLKDVLEERISLEVQLEQLR) forms a coiled coil.

As to quaternary structure, homodimer (Potential). Interacts with RALBP1, CRK and GRB2. Binding to RALBP1 does not affect its Ral-binding activity. Forms a complex with the SH3 domains of CRK and GRB2 which may link it to an EGF-responsive tyrosine kinase. Interacts with RAB11FIP2. Interacts with AMPH, ITSN1 (via SH3 domains) and SGIP1; may be involved in clathrin-mediated endocytosis. EGF stimulates phosphorylation on Tyr-residues. As to expression, expressed in all tissues examined. The highest level expression was found in the kidney and testis.

The protein resides in the membrane. It localises to the clathrin-coated pit. May coordinate the cellular actions of activated EGF receptors and Ral-GTPases. The chain is RalBP1-associated Eps domain-containing protein 1 (Reps1) from Mus musculus (Mouse).